The chain runs to 683 residues: Methionine--tRNA ligase (683 aa).

Residues 15-25 (YYPSGKLHIGN) carry the 'HIGH' region motif. The short motif at 311-315 (KMSKS) is the 'KMSKS' region element. Position 314 (Lys314) interacts with ATP. Residues 581–683 (DFDKVELKVA…DNMVNGSLIS (103 aa)) form the tRNA-binding domain.

The protein belongs to the class-I aminoacyl-tRNA synthetase family. MetG type 2B subfamily. As to quaternary structure, homodimer.

Its subcellular location is the cytoplasm. It carries out the reaction tRNA(Met) + L-methionine + ATP = L-methionyl-tRNA(Met) + AMP + diphosphate. In terms of biological role, is required not only for elongation of protein synthesis but also for the initiation of all mRNA translation through initiator tRNA(fMet) aminoacylation. The polypeptide is Methionine--tRNA ligase (Lactiplantibacillus plantarum (strain ATCC BAA-793 / NCIMB 8826 / WCFS1) (Lactobacillus plantarum)).